The chain runs to 273 residues: MTNLQDIVVNEMKVKKHIDSEQESREIIQFIKSYVQSHSFIKSLVLGISGGQDSTLTGKLAQLAVEELRNEGRDCQFIAVKLPYGVQKDAEEVEDALNFIHPDEIITVNIKPAVDQSVKSLNEAGIELTDFQRGNEKARERMKVQFSIASNRSGIVIGTDHSAENITGFYTKYGDGAADIAPIFGLNKRQGRQLLKYLNAPKHLYEKVPTADLEDDKPQLPDEEALGVTYDQIDDYLEGKHISSEARDTIENHYVKNAHKRELAYTRYTWPKN.

47–54 (GISGGQDS) is an ATP binding site. Residue Asp53 coordinates Mg(2+). Arg139 serves as a coordination point for deamido-NAD(+). Thr159 is a binding site for ATP. Glu164 contributes to the Mg(2+) binding site. Deamido-NAD(+)-binding residues include Lys172 and Asp179. Residues Lys188 and Thr210 each coordinate ATP. A deamido-NAD(+)-binding site is contributed by 259-260 (HK).

It belongs to the NAD synthetase family. Homodimer.

The enzyme catalyses deamido-NAD(+) + NH4(+) + ATP = AMP + diphosphate + NAD(+) + H(+). It participates in cofactor biosynthesis; NAD(+) biosynthesis; NAD(+) from deamido-NAD(+) (ammonia route): step 1/1. Its function is as follows. Catalyzes the ATP-dependent amidation of deamido-NAD to form NAD. Uses ammonia as a nitrogen source. This chain is NH(3)-dependent NAD(+) synthetase, found in Staphylococcus haemolyticus (strain JCSC1435).